The chain runs to 220 residues: Ribosomal RNA large subunit methyltransferase E (220 aa).

5 residues coordinate S-adenosyl-L-methionine: G64, W66, D92, D108, and D133. K173 functions as the Proton acceptor in the catalytic mechanism.

It belongs to the class I-like SAM-binding methyltransferase superfamily. RNA methyltransferase RlmE family.

It localises to the cytoplasm. The enzyme catalyses uridine(2552) in 23S rRNA + S-adenosyl-L-methionine = 2'-O-methyluridine(2552) in 23S rRNA + S-adenosyl-L-homocysteine + H(+). In terms of biological role, specifically methylates the uridine in position 2552 of 23S rRNA at the 2'-O position of the ribose in the fully assembled 50S ribosomal subunit. In Acidovorax sp. (strain JS42), this protein is Ribosomal RNA large subunit methyltransferase E.